A 265-amino-acid chain; its full sequence is Glutamate racemase (265 aa).

Residues D7 to S8 and Y39 to G40 contribute to the substrate site. C70 (proton donor/acceptor) is an active-site residue. N71 to T72 contributes to the substrate binding site. C179 (proton donor/acceptor) is an active-site residue. A substrate-binding site is contributed by T180–H181.

It belongs to the aspartate/glutamate racemases family.

It carries out the reaction L-glutamate = D-glutamate. The protein operates within cell wall biogenesis; peptidoglycan biosynthesis. Its function is as follows. Provides the (R)-glutamate required for cell wall biosynthesis. This is Glutamate racemase from Gloeobacter violaceus (strain ATCC 29082 / PCC 7421).